Consider the following 319-residue polypeptide: D-alanine--D-alanine ligase (319 aa).

The ATP-grasp domain maps to 120-315; it reads KRVLAQAGVP…YPELLRRLVE (196 aa). An ATP-binding site is contributed by 147–198; sequence DPPFFVKPANTGSSVGISRVERFQDLEAALALAFRYDEKAVVEKALSPVREL. 3 residues coordinate Mg(2+): Asp-270, Glu-282, and Asn-284.

Belongs to the D-alanine--D-alanine ligase family. Requires Mg(2+) as cofactor. Mn(2+) serves as cofactor.

Its subcellular location is the cytoplasm. It catalyses the reaction 2 D-alanine + ATP = D-alanyl-D-alanine + ADP + phosphate + H(+). Its pathway is cell wall biogenesis; peptidoglycan biosynthesis. Its function is as follows. Cell wall formation. The sequence is that of D-alanine--D-alanine ligase from Thermus thermophilus (strain ATCC BAA-163 / DSM 7039 / HB27).